The sequence spans 497 residues: Probable small intestine urate exporter (497 aa).

N47, N56, N66, N75, and N90 each carry an N-linked (GlcNAc...) asparagine glycan. 10 helical membrane passes run 149–169 (SFLT…LIVL), 171–191 (IVQG…WVKW), 203–223 (IAGS…GLLC), 230–250 (YVFY…FPLI), 292–312 (LPLW…YTIM), 332–352 (ILSA…GLLA), 368–388 (KLFT…LPWV), 398–418 (FLVL…VNFL), 431–451 (LLQV…GFFI), and 461–481 (NVFL…LIFG).

It belongs to the major facilitator superfamily. Sodium/anion cotransporter family. As to expression, abundantly expressed in pancreas, liver, colon and small intestine, less in kidney. Not detected in the adrenal glands, brain, placenta, heart, testis, skeletal muscle, and lungs.

It is found in the apical cell membrane. It carries out the reaction 3 Na(+)(out) + phosphate(out) = 3 Na(+)(in) + phosphate(in). The catalysed reaction is urate(out) + n chloride(in) = urate(in) + n chloride(out). The enzyme catalyses L-thyroxine(out) = L-thyroxine(in). It catalyses the reaction 3,3',5-triiodo-L-thyronine(out) = 3,3',5-triiodo-L-thyronine(in). Its function is as follows. Acts as a membrane potential-dependent organic anion transporter, the transport requires a low concentration of chloride ions. Mediates chloride-dependent transport of urate. Mediates sodium-independent high affinity transport of thyroid hormones including L-thyroxine (T4) and 3,3',5-triiodo-L-thyronine (T3). Can actively transport inorganic phosphate into cells via Na(+) cotransport. This Homo sapiens (Human) protein is Probable small intestine urate exporter (SLC17A4).